The primary structure comprises 262 residues: Small ribosomal subunit protein uS2 (262 aa).

The protein belongs to the universal ribosomal protein uS2 family.

This chain is Small ribosomal subunit protein uS2, found in Borreliella burgdorferi (strain ZS7) (Borrelia burgdorferi).